Here is a 201-residue protein sequence, read N- to C-terminus: MIASVRGEVLEIALDHVVVEAAGVGYRLNATPSTLATLTRGAEARLYTAMIVREDSMTLYGFADTEARDLFGLLQTVSGVGPRLAMAVLAVLEPEALRKALAESNVAALTRVPGIGKRGAERMVVELRDKVNLVPVQAGPPGSTPAVAATPVREQVVEALTGLGFPLKQAEQALDTVLAEQPAADTSTALRAALSLLGKNR.

Residues Met1–Ala63 are domain I. Residues Asp64–Gly142 are domain II. Positions Ser143–Arg153 are flexible linker. The segment at Arg153–Arg201 is domain III.

The protein belongs to the RuvA family. In terms of assembly, homotetramer. Forms an RuvA(8)-RuvB(12)-Holliday junction (HJ) complex. HJ DNA is sandwiched between 2 RuvA tetramers; dsDNA enters through RuvA and exits via RuvB. An RuvB hexamer assembles on each DNA strand where it exits the tetramer. Each RuvB hexamer is contacted by two RuvA subunits (via domain III) on 2 adjacent RuvB subunits; this complex drives branch migration. In the full resolvosome a probable DNA-RuvA(4)-RuvB(12)-RuvC(2) complex forms which resolves the HJ.

The protein localises to the cytoplasm. Its function is as follows. The RuvA-RuvB-RuvC complex processes Holliday junction (HJ) DNA during genetic recombination and DNA repair, while the RuvA-RuvB complex plays an important role in the rescue of blocked DNA replication forks via replication fork reversal (RFR). RuvA specifically binds to HJ cruciform DNA, conferring on it an open structure. The RuvB hexamer acts as an ATP-dependent pump, pulling dsDNA into and through the RuvAB complex. HJ branch migration allows RuvC to scan DNA until it finds its consensus sequence, where it cleaves and resolves the cruciform DNA. The polypeptide is Holliday junction branch migration complex subunit RuvA (Nocardia farcinica (strain IFM 10152)).